Reading from the N-terminus, the 70-residue chain is SPbeta prophage-derived uncharacterized protein YorZ (70 aa).

The polypeptide is SPbeta prophage-derived uncharacterized protein YorZ (yorZ) (Bacillus subtilis (strain 168)).